A 278-amino-acid polypeptide reads, in one-letter code: Hydroxyethylthiazole kinase (278 aa).

Met-48 lines the substrate pocket. Residues Arg-124 and Thr-175 each contribute to the ATP site. Substrate is bound at residue Gly-202.

This sequence belongs to the Thz kinase family. Requires Mg(2+) as cofactor.

It carries out the reaction 5-(2-hydroxyethyl)-4-methylthiazole + ATP = 4-methyl-5-(2-phosphooxyethyl)-thiazole + ADP + H(+). It functions in the pathway cofactor biosynthesis; thiamine diphosphate biosynthesis; 4-methyl-5-(2-phosphoethyl)-thiazole from 5-(2-hydroxyethyl)-4-methylthiazole: step 1/1. In terms of biological role, catalyzes the phosphorylation of the hydroxyl group of 4-methyl-5-beta-hydroxyethylthiazole (THZ). The polypeptide is Hydroxyethylthiazole kinase (Clostridium botulinum (strain Eklund 17B / Type B)).